We begin with the raw amino-acid sequence, 282 residues long: Bis(5'-nucleosyl)-tetraphosphatase, symmetrical (282 aa).

The protein belongs to the Ap4A hydrolase family.

The enzyme catalyses P(1),P(4)-bis(5'-adenosyl) tetraphosphate + H2O = 2 ADP + 2 H(+). In terms of biological role, hydrolyzes diadenosine 5',5'''-P1,P4-tetraphosphate to yield ADP. The chain is Bis(5'-nucleosyl)-tetraphosphatase, symmetrical from Klebsiella pneumoniae subsp. pneumoniae (strain ATCC 700721 / MGH 78578).